Here is a 337-residue protein sequence, read N- to C-terminus: tRNA N6-adenosine threonylcarbamoyltransferase (337 aa).

Fe cation-binding residues include histidine 111 and histidine 115. Substrate-binding positions include 134-138 (LVSGG), aspartate 167, glycine 180, and asparagine 272. Residue aspartate 300 participates in Fe cation binding.

The protein belongs to the KAE1 / TsaD family. Fe(2+) serves as cofactor.

The protein localises to the cytoplasm. The catalysed reaction is L-threonylcarbamoyladenylate + adenosine(37) in tRNA = N(6)-L-threonylcarbamoyladenosine(37) in tRNA + AMP + H(+). Functionally, required for the formation of a threonylcarbamoyl group on adenosine at position 37 (t(6)A37) in tRNAs that read codons beginning with adenine. Is involved in the transfer of the threonylcarbamoyl moiety of threonylcarbamoyl-AMP (TC-AMP) to the N6 group of A37, together with TsaE and TsaB. TsaD likely plays a direct catalytic role in this reaction. This chain is tRNA N6-adenosine threonylcarbamoyltransferase, found in Methylococcus capsulatus (strain ATCC 33009 / NCIMB 11132 / Bath).